Reading from the N-terminus, the 302-residue chain is Sulfotransferase 1C4 (302 aa).

55 to 60 (KAGTTW) lines the 3'-phosphoadenylyl sulfate pocket. 113–115 (KTH) serves as a coordination point for substrate. The Proton acceptor role is filled by His-115. 3'-phosphoadenylyl sulfate is bound by residues Arg-137, Ser-145, Tyr-200, 234-239 (TSFDVM), and 262-266 (FMRKG).

It belongs to the sulfotransferase 1 family. Expressed at high levels in fetal lung and kidney and at low levels in fetal heart, adult kidney, ovary and spinal cord.

The protein localises to the cytoplasm. It localises to the cytosol. The catalysed reaction is a phenol + 3'-phosphoadenylyl sulfate = an aryl sulfate + adenosine 3',5'-bisphosphate + H(+). It carries out the reaction 17beta-estradiol + 3'-phosphoadenylyl sulfate = 17beta-estradiol 3-sulfate + adenosine 3',5'-bisphosphate + H(+). The enzyme catalyses bisphenol A + 3'-phosphoadenylyl sulfate = bisphenyl A sulfate + adenosine 3',5'-bisphosphate + H(+). In terms of biological role, sulfotransferase that utilizes 3'-phospho-5'-adenylyl sulfate (PAPS) as sulfonate donor to catalyze the sulfate conjugation of phenolic compounds. Can also sulfonate estrogenic compounds, however, the dietary flavonoids (phytoestrogen) and environmental estrogens, like bisphenol A are better substrates than 17beta-estradiol (E2). Mediates the sulfation of doxorubicin and its analog epirubicin, two antitumor anthracyclines. This chain is Sulfotransferase 1C4, found in Homo sapiens (Human).